Reading from the N-terminus, the 74-residue chain is Translational regulator CsrA (74 aa).

This sequence belongs to the CsrA/RsmA family. As to quaternary structure, homodimer; the beta-strands of each monomer intercalate to form a hydrophobic core, while the alpha-helices form wings that extend away from the core.

The protein resides in the cytoplasm. Functionally, a translational regulator that binds mRNA to regulate translation initiation and/or mRNA stability. Usually binds in the 5'-UTR at or near the Shine-Dalgarno sequence preventing ribosome-binding, thus repressing translation. Its main target seems to be the major flagellin gene, while its function is anatagonized by FliW. This chain is Translational regulator CsrA, found in Alkaliphilus oremlandii (strain OhILAs) (Clostridium oremlandii (strain OhILAs)).